The following is a 105-amino-acid chain: Cuticle protein AMP4 (105 aa).

The disordered stretch occupies residues 1 to 21; sequence DRDAQTLTDERNDQGDGNFRY. In terms of domain architecture, Chitin-binding type R&amp;R spans 16 to 81; the sequence is DGNFRYEFET…PSSDLLPVGP (66 aa).

Arthrodial membrane.

This is Cuticle protein AMP4 from Homarus americanus (American lobster).